A 101-amino-acid polypeptide reads, in one-letter code: Small ribosomal subunit protein uS14 (101 aa).

The protein belongs to the universal ribosomal protein uS14 family. In terms of assembly, part of the 30S ribosomal subunit. Contacts proteins S3 and S10.

Binds 16S rRNA, required for the assembly of 30S particles and may also be responsible for determining the conformation of the 16S rRNA at the A site. In Xylella fastidiosa (strain 9a5c), this protein is Small ribosomal subunit protein uS14.